The sequence spans 325 residues: Aldo-keto reductase family 1 member A1 (325 aa).

Ala2 carries the post-translational modification N-acetylalanine. At Ser4 the chain carries Phosphoserine. Residues 11-20 (GQKMPLIGLG), Thr21, and Trp22 contribute to the NADP(+) site. Residue Ser38 is modified to Phosphoserine. Asp45 is a binding site for NADP(+). Tyr50 functions as the Proton donor in the catalytic mechanism. Position 127 is an N6-acetyllysine; alternate (Lys127). Residue Lys127 is modified to N6-succinyllysine; alternate. At Lys145 the chain carries N6-succinyllysine. Positions 162, 163, 211, 213, 215, 216, 263, 264, 265, 266, 269, 272, and 273 each coordinate NADP(+). Ser211 carries the post-translational modification Phosphoserine.

Belongs to the aldo/keto reductase family. As to quaternary structure, monomer. In terms of tissue distribution, widely expressed. Highly expressed in kidney, salivary gland and liver. Detected in trachea, stomach, brain, lung, prostate, placenta, mammary gland, small intestine and lung.

It is found in the cytoplasm. It localises to the cytosol. The protein localises to the apical cell membrane. The enzyme catalyses a primary alcohol + NADP(+) = an aldehyde + NADPH + H(+). It carries out the reaction allyl alcohol + NADP(+) = acrolein + NADPH + H(+). The catalysed reaction is glycerol + NADP(+) = D-glyceraldehyde + NADPH + H(+). It catalyses the reaction glycerol + NADP(+) = L-glyceraldehyde + NADPH + H(+). The enzyme catalyses hydroxyacetone + NADP(+) = methylglyoxal + NADPH + H(+). It carries out the reaction a 4-hydroxynonen-1-ol + NADP(+) = a 4-hydroxynonenal + NADPH + H(+). The catalysed reaction is 3-deoxyfructose + NADP(+) = 3-deoxyglucosone + NADPH + H(+). It catalyses the reaction L-gulonate + NADP(+) = aldehydo-D-glucuronate + NADPH + H(+). The enzyme catalyses L-gulono-1,4-lactone + NADP(+) = D-glucurono-3,6-lactone + NADPH + H(+). It carries out the reaction pyridine 3-methanol + NADP(+) = pyridine-3-carbaldehyde + NADPH + H(+). The catalysed reaction is S-nitroso-CoA + NADPH + H(+) = sulfinamide-CoA + NADP(+). It catalyses the reaction S-nitrosoglutathione + NADPH + H(+) = S-(hydroxysulfenamide)glutathione + NADP(+). Its function is as follows. Catalyzes the NADPH-dependent reduction of a wide variety of carbonyl-containing compounds to their corresponding alcohols. Displays enzymatic activity towards endogenous metabolites such as aromatic and aliphatic aldehydes, ketones, monosaccharides and bile acids, with a preference for negatively charged substrates, such as glucuronate and succinic semialdehyde. Functions as a detoxifiying enzyme by reducing a range of toxic aldehydes. Reduces methylglyoxal and 3-deoxyglucosone, which are present at elevated levels under hyperglycemic conditions and are cytotoxic. Involved also in the detoxification of lipid-derived aldehydes like acrolein. Plays a role in the activation of procarcinogens, such as polycyclic aromatic hydrocarbon trans-dihydrodiols, and in the metabolism of various xenobiotics and drugs, including the anthracyclines doxorubicin (DOX) and daunorubicin (DAUN). Also acts as an inhibitor of protein S-nitrosylation by mediating degradation of S-nitroso-coenzyme A (S-nitroso-CoA), a cofactor required to S-nitrosylate proteins. S-nitroso-CoA reductase activity is involved in reprogramming intermediary metabolism in renal proximal tubules, notably by inhibiting protein S-nitrosylation of isoform 2 of PKM (PKM2). Also acts as a S-nitroso-glutathione reductase by catalyzing the NADPH-dependent reduction of S-nitrosoglutathione. Displays no reductase activity towards retinoids. This Homo sapiens (Human) protein is Aldo-keto reductase family 1 member A1 (AKR1A1).